The primary structure comprises 367 residues: Glutamate 5-kinase (367 aa).

Residue Lys10 coordinates ATP. 3 residues coordinate substrate: Ser50, Asp137, and Asn149. ATP is bound by residues 169–170 (TD) and 211–217 (TGGMATK). Residues 275 to 353 (AGEITVDDGA…QQISEILGYE (79 aa)) enclose the PUA domain.

This sequence belongs to the glutamate 5-kinase family.

It is found in the cytoplasm. It carries out the reaction L-glutamate + ATP = L-glutamyl 5-phosphate + ADP. The protein operates within amino-acid biosynthesis; L-proline biosynthesis; L-glutamate 5-semialdehyde from L-glutamate: step 1/2. Its function is as follows. Catalyzes the transfer of a phosphate group to glutamate to form L-glutamate 5-phosphate. The chain is Glutamate 5-kinase from Yersinia pseudotuberculosis serotype IB (strain PB1/+).